The chain runs to 283 residues: Diaminopimelate epimerase (283 aa).

Residues asparagine 13 and asparagine 67 each contribute to the substrate site. Cysteine 76 acts as the Proton donor in catalysis. Residues 77 to 78 (GN), asparagine 166, asparagine 199, and 217 to 218 (ER) each bind substrate. The Proton acceptor role is filled by cysteine 226. Position 227-228 (227-228 (GT)) interacts with substrate.

The protein belongs to the diaminopimelate epimerase family. As to quaternary structure, homodimer.

It is found in the cytoplasm. It carries out the reaction (2S,6S)-2,6-diaminopimelate = meso-2,6-diaminopimelate. It functions in the pathway amino-acid biosynthesis; L-lysine biosynthesis via DAP pathway; DL-2,6-diaminopimelate from LL-2,6-diaminopimelate: step 1/1. Its function is as follows. Catalyzes the stereoinversion of LL-2,6-diaminopimelate (L,L-DAP) to meso-diaminopimelate (meso-DAP), a precursor of L-lysine and an essential component of the bacterial peptidoglycan. This is Diaminopimelate epimerase from Desulforapulum autotrophicum (strain ATCC 43914 / DSM 3382 / VKM B-1955 / HRM2) (Desulfobacterium autotrophicum).